Here is a 450-residue protein sequence, read N- to C-terminus: MSHALPIAAIATAPGRGGIGVVRVSGPRLDAYIRALLGRDLTPRHAHYLPFLAEDGERIDEGIAIYFQGPHSYTGEDVLELQGHGGPAVLKRLLARCLEAGRSLGMRLAEPGEFTRRAFLNDRMDLAQAEAVADLIEASSEAAARGAMASLSGEFSQRINDLSGRIVHLRMLVEATLDFPEEEIDFLEKYQARPTLDGLRQDLDTLIAQARQGIILREGLHVVLAGQPNVGKSSLLNALAGDDIAIVTPIAGTTRDKVVQEIFIDGVPLHIVDTAGLRETEDTVESIGIARTWKEIERADLILHLQDATAPGDILDVDITARLPARTPVLAVFNKIDLLTSTAQLAENSIGISAKQGLGLEELRARLLQMAGWNPGAESPWLARERHLHALQAARDHLDIAAEHASHDDRVLDLFAEELRLSHESLSSITGKFTSDDLLGEIFSSFCIGK.

The (6S)-5-formyl-5,6,7,8-tetrahydrofolate site is built by R23, E80, and R123. The region spanning 219 to 372 (GLHVVLAGQP…LRARLLQMAG (154 aa)) is the TrmE-type G domain. N229 serves as a coordination point for K(+). GTP-binding positions include 229–234 (NVGKSS), 248–254 (TPIAGTT), and 273–276 (DTAG). S233 contributes to the Mg(2+) binding site. T248, I250, and T253 together coordinate K(+). Residue T254 participates in Mg(2+) binding. Residue K450 coordinates (6S)-5-formyl-5,6,7,8-tetrahydrofolate.

The protein belongs to the TRAFAC class TrmE-Era-EngA-EngB-Septin-like GTPase superfamily. TrmE GTPase family. In terms of assembly, homodimer. Heterotetramer of two MnmE and two MnmG subunits. Requires K(+) as cofactor.

The protein localises to the cytoplasm. Its function is as follows. Exhibits a very high intrinsic GTPase hydrolysis rate. Involved in the addition of a carboxymethylaminomethyl (cmnm) group at the wobble position (U34) of certain tRNAs, forming tRNA-cmnm(5)s(2)U34. In Bordetella avium (strain 197N), this protein is tRNA modification GTPase MnmE.